The sequence spans 618 residues: DNA mismatch repair protein MutL (618 aa).

Low complexity predominate over residues 366-381 (AEPTAAREPATPRYSG). The interval 366–405 (AEPTAAREPATPRYSGGTSGGNGGRQSAGGWPHAQPGYQK) is disordered. Positions 382 to 392 (GTSGGNGGRQS) are enriched in gly residues.

It belongs to the DNA mismatch repair MutL/HexB family.

In terms of biological role, this protein is involved in the repair of mismatches in DNA. It is required for dam-dependent methyl-directed DNA mismatch repair. May act as a 'molecular matchmaker', a protein that promotes the formation of a stable complex between two or more DNA-binding proteins in an ATP-dependent manner without itself being part of a final effector complex. This Salmonella agona (strain SL483) protein is DNA mismatch repair protein MutL.